A 353-amino-acid chain; its full sequence is UPF0283 membrane protein YcjF (353 aa).

The next 3 helical transmembrane spans lie at 70–90 (MVMG…VQWT), 100–120 (VALG…GSVV), and 213–233 (ESTL…FIAW).

This sequence belongs to the UPF0283 family.

The protein localises to the cell inner membrane. In Escherichia coli O139:H28 (strain E24377A / ETEC), this protein is UPF0283 membrane protein YcjF.